The following is a 343-amino-acid chain: Protein FAM50A-B (343 aa).

Disordered stretches follow at residues 1–25 (MAQYKGAASEAGRAMQLMKKREKQR) and 125–181 (EEDE…EEEN). The span at 125-142 (EEDEECEDEESEEEEEEY) shows a compositional bias: acidic residues. Over residues 172–181 (PDRDREEEEN) the composition is skewed to basic and acidic residues.

The protein belongs to the FAM50 family.

The protein resides in the nucleus. Its function is as follows. Probably involved in the regulation of pre-mRNA splicing. This chain is Protein FAM50A-B (fam50a-b), found in Xenopus laevis (African clawed frog).